We begin with the raw amino-acid sequence, 403 residues long: Shaggy-related protein kinase GSK4 (403 aa).

The Protein kinase domain maps to 71 to 355 (YMAERVVGTG…ALEACAHSFF (285 aa)). Residues 77 to 85 (VGTGSFGVV) and Lys100 contribute to the ATP site. Catalysis depends on Asp196, which acts as the Proton acceptor.

The protein belongs to the protein kinase superfamily. CMGC Ser/Thr protein kinase family. GSK-3 subfamily. As to quaternary structure, interacts with LIC.

It carries out the reaction L-seryl-[protein] + ATP = O-phospho-L-seryl-[protein] + ADP + H(+). The catalysed reaction is L-threonyl-[protein] + ATP = O-phospho-L-threonyl-[protein] + ADP + H(+). Probable serine-threonine kinase that may regulate brassinosteroid signaling. The protein is Shaggy-related protein kinase GSK4 of Oryza sativa subsp. japonica (Rice).